The sequence spans 56 residues: Small ribosomal subunit protein uS14 (56 aa).

Residues Cys21, Cys24, Cys39, and Cys42 each coordinate Zn(2+).

Belongs to the universal ribosomal protein uS14 family. The cofactor is Zn(2+).

This Candida glabrata (strain ATCC 2001 / BCRC 20586 / JCM 3761 / NBRC 0622 / NRRL Y-65 / CBS 138) (Yeast) protein is Small ribosomal subunit protein uS14 (RPS29).